The following is an 876-amino-acid chain: Alanine--tRNA ligase (876 aa).

Lys-74 carries the N6-acetyllysine modification. Residues His-564, His-568, Cys-666, and His-670 each contribute to the Zn(2+) site.

Belongs to the class-II aminoacyl-tRNA synthetase family. In terms of assembly, homotetramer. It depends on Zn(2+) as a cofactor.

It is found in the cytoplasm. It carries out the reaction tRNA(Ala) + L-alanine + ATP = L-alanyl-tRNA(Ala) + AMP + diphosphate. Functionally, catalyzes the attachment of alanine to tRNA(Ala) in a two-step reaction: alanine is first activated by ATP to form Ala-AMP and then transferred to the acceptor end of tRNA(Ala). Also edits incorrectly charged Ser-tRNA(Ala) and Gly-tRNA(Ala) via its editing domain. The protein is Alanine--tRNA ligase of Escherichia coli O157:H7.